A 119-amino-acid chain; its full sequence is Large ribosomal subunit protein bL20 (119 aa).

It belongs to the bacterial ribosomal protein bL20 family.

Functionally, binds directly to 23S ribosomal RNA and is necessary for the in vitro assembly process of the 50S ribosomal subunit. It is not involved in the protein synthesizing functions of that subunit. The chain is Large ribosomal subunit protein bL20 from Shewanella frigidimarina (strain NCIMB 400).